We begin with the raw amino-acid sequence, 678 residues long: F-box/LRR-repeat protein 5 (678 aa).

The segment at 1–159 (MAPFPDEVDL…IKKKVIAQHC (159 aa)) is hemerythrin-like. Fe(3+) is bound by residues His15, His57, Glu58, Glu61, His80, His126, and Glu130. The F-box domain maps to 202–248 (SSSISSLPPEVMLNIFTYLNPQDLCRCSQVNTEWAQLAKTGSLWRHL). Residues 285–308 (YQEWDEDADIDESEETGEEEDSSI) form a disordered region. The span at 287–306 (EWDEDADIDESEETGEEEDS) shows a compositional bias: acidic residues. LRR repeat units follow at residues 314–340 (EKEL…VLAY), 341–366 (SSAT…DLTQ), 367–392 (TDIS…DLSG), 393–420 (CDKI…RLLK), 566–594 (HSDI…SLSG), 595–622 (CHQI…NLSG), and 623–648 (CLNV…HFYY). [2Fe-2S] cluster contacts are provided by Cys649, Cys663, Cys673, and Cys674. The stretch at 655 to 678 (PHGATASGCQNLQCGFRMCCRSGE) is one LRR 8 repeat.

As to quaternary structure, part of a SCF (SKP1-cullin-F-box) protein ligase complex. It depends on [2Fe-2S] cluster as a cofactor. In terms of processing, ubiquitinated upon iron and oxygen depletion, leading to its degradation by the proteasome. Ubiquitination is regulated by the hemerythrin-like region that acts as an oxygen and iron sensor.

The protein localises to the cytoplasm. It localises to the perinuclear region. The protein resides in the nucleus. It functions in the pathway protein modification; protein ubiquitination. In terms of biological role, component of some SCF (SKP1-cullin-F-box) protein ligase complex that plays a central role in iron homeostasis by promoting the ubiquitination and subsequent degradation of ireb2/irp2. Upon high iron and oxygen level, it specifically recognizes and binds ireb2/irp2, promoting its ubiquitination and degradation by the proteasome. This chain is F-box/LRR-repeat protein 5 (fbxl5), found in Xenopus laevis (African clawed frog).